The sequence spans 331 residues: MNKTEKKFLENMHRQKLVANGDAVLLAVSGGPDSMALLHLFASVASVLHCRLGVAHCNFMLRGDASDADESFVRDACAELGIDFHVRRFDTASVSSAWKKSIEETARLLRYDFFGELCREASYTRIATGHHSDDNAETVLFNLFRGAGISGLRGIRVRHGAIIRPLLPFTRREIVAYLEEKRVVWRDDHTNEGIEYDRNFIRNRVIPVIEERFAHKLMPSLQRISEHAGELEEFIDLHISRLLEAHPGLDLAGGKLHVGTMRQLSMFERKEILKRALKLQGLSVGSNVLNRIAGLLDNQAGRSVPAGAGVEVVLHDGFLRFRQTGNPSDHR.

Position 29–34 (S29–S34) interacts with ATP.

The protein belongs to the tRNA(Ile)-lysidine synthase family.

Its subcellular location is the cytoplasm. It carries out the reaction cytidine(34) in tRNA(Ile2) + L-lysine + ATP = lysidine(34) in tRNA(Ile2) + AMP + diphosphate + H(+). Its function is as follows. Ligates lysine onto the cytidine present at position 34 of the AUA codon-specific tRNA(Ile) that contains the anticodon CAU, in an ATP-dependent manner. Cytidine is converted to lysidine, thus changing the amino acid specificity of the tRNA from methionine to isoleucine. The chain is tRNA(Ile)-lysidine synthase from Chlorobaculum tepidum (strain ATCC 49652 / DSM 12025 / NBRC 103806 / TLS) (Chlorobium tepidum).